A 343-amino-acid polypeptide reads, in one-letter code: N-acetyl-gamma-glutamyl-phosphate reductase (343 aa).

The active site involves Cys149.

This sequence belongs to the NAGSA dehydrogenase family. Type 1 subfamily.

Its subcellular location is the cytoplasm. It catalyses the reaction N-acetyl-L-glutamate 5-semialdehyde + phosphate + NADP(+) = N-acetyl-L-glutamyl 5-phosphate + NADPH + H(+). Its pathway is amino-acid biosynthesis; L-arginine biosynthesis; N(2)-acetyl-L-ornithine from L-glutamate: step 3/4. In terms of biological role, catalyzes the NADPH-dependent reduction of N-acetyl-5-glutamyl phosphate to yield N-acetyl-L-glutamate 5-semialdehyde. In Methanococcus maripaludis (strain C7 / ATCC BAA-1331), this protein is N-acetyl-gamma-glutamyl-phosphate reductase.